Reading from the N-terminus, the 85-residue chain is Large ribosomal subunit protein bL27 (85 aa).

The disordered stretch occupies residues 1–21 (MAHKKGASSSRNGRDSNAQRL). Positions 7–19 (ASSSRNGRDSNAQ) are enriched in polar residues.

The protein belongs to the bacterial ribosomal protein bL27 family.

In Beutenbergia cavernae (strain ATCC BAA-8 / DSM 12333 / CCUG 43141 / JCM 11478 / NBRC 16432 / NCIMB 13614 / HKI 0122), this protein is Large ribosomal subunit protein bL27.